Here is a 1378-residue protein sequence, read N- to C-terminus: Roundabout homolog 2 (1378 aa).

The signal sequence occupies residues 1–21; sequence MSLLMFTQLLLCGFLYVRVDG. The Extracellular segment spans residues 22-859; it reads SRLRQEDFPP…EQITDVVKQP (838 aa). Ig-like C2-type domains are found at residues 31–127, 133–220, 225–309, 314–409, and 418–504; these read PRIV…ASLE, DDFR…AELT, PTFL…ATLT, PQFV…LEVT, and PIIL…AVLD. Cysteines 52 and 110 form a disulfide. An N-linked (GlcNAc...) asparagine glycan is attached at Asn123. Cystine bridges form between Cys154-Cys203, Cys246-Cys293, and Cys335-Cys391. N-linked (GlcNAc...) asparagine glycosylation occurs at Asn426. Cysteines 439 and 488 form a disulfide. Fibronectin type-III domains lie at 524–618, 637–735, and 739–836; these read PPSK…TQDI, VLVR…TEEA, and PPQS…IGRR. The segment at 603 to 625 is disordered; that stretch reads LSDPSPMSDPVRTQDISPPAQGV. Asn752, Asn782, Asn789, and Asn845 each carry an N-linked (GlcNAc...) asparagine glycan. A helical transmembrane segment spans residues 860–880; sequence AFIAGIGGACWVILMGFSIWL. The Cytoplasmic segment spans residues 881-1378; the sequence is YWRRKKRKGL…NSQGQFTGEL (498 aa). 3 disordered regions span residues 1032-1084, 1124-1156, and 1215-1348; these read GFGY…PLPG, EDDDRVPTPPVRGVASSPAISFGQQSTATLTPS, and DVAD…KTEV. Low complexity predominate over residues 1058 to 1067; the sequence is SSKPQKNNGS. Positions 1141–1155 are enriched in polar residues; sequence PAISFGQQSTATLTP. Thr1154 carries the post-translational modification Phosphothreonine. At Ser1156 the chain carries Phosphoserine. Residues 1215 to 1228 are compositionally biased toward acidic residues; sequence DVADDDADDEEEAL. Over residues 1240–1285 the composition is skewed to polar residues; that stretch reads TPGSSMDNLDSSVTGKAFTSSQRPRPTSPFSTDSNTSAALSQSQRP. Residues 1319–1343 are compositionally biased toward low complexity; that stretch reads SKPSFPSPGGHSSSGTASSKGSTGP.

Belongs to the immunoglobulin superfamily. ROBO family. As to quaternary structure, interacts with SLIT2.

Its subcellular location is the membrane. Receptor for SLIT2, and probably SLIT1, which are thought to act as molecular guidance cue in cellular migration, including axonal navigation at the ventral midline of the neural tube and projection of axons to different regions during neuronal development. The chain is Roundabout homolog 2 (ROBO2) from Homo sapiens (Human).